Reading from the N-terminus, the 292-residue chain is MSMPATSTKTTKLATSLIDEYALLGWRAMLTEVNLSPKPGLVDRINCGAHKDMALEDFHRSALAIQGWLPRFIEFGACSAEMAPEAVLNGLRPIGMACEGDMFRATAGVNTHKGSIFSLGLLCAAIGRLLQLNQPVTPTTVCSTAASFCRGLTDRELRTNNSQRTAGQRLYQQLGLTGARGEAEAGYPLVINHALPHYLTLLDQGLDPELALLDTLLLLMATNGDTNVASRGGEGGLRWLQREAQTLLNNGGIRTPADLDYLRQFDRECIERNLSPGGSADLLILTWFLAQI.

The protein belongs to the CitG/MdcB family.

The catalysed reaction is 3'-dephospho-CoA + ATP = 2'-(5''-triphospho-alpha-D-ribosyl)-3'-dephospho-CoA + adenine. Functionally, catalyzes the formation of 2-(5''-triphosphoribosyl)-3'-dephosphocoenzyme-A, the precursor of the prosthetic group of the holo-acyl carrier protein (gamma chain) of citrate lyase, from ATP and dephospho-CoA. The polypeptide is 2-(5''-triphosphoribosyl)-3'-dephosphocoenzyme-A synthase (Escherichia coli O7:K1 (strain IAI39 / ExPEC)).